The primary structure comprises 248 residues: 2,3-bisphosphoglycerate-dependent phosphoglycerate mutase (248 aa).

Substrate contacts are provided by residues 10–17 (RHGQSEWN), 23–24 (TG), Arg-62, 89–92 (ERHY), Lys-100, 116–117 (RR), and 183–184 (GN). The active-site Tele-phosphohistidine intermediate is the His-11. The Proton donor/acceptor role is filled by Glu-89.

This sequence belongs to the phosphoglycerate mutase family. BPG-dependent PGAM subfamily.

It catalyses the reaction (2R)-2-phosphoglycerate = (2R)-3-phosphoglycerate. It functions in the pathway carbohydrate degradation; glycolysis; pyruvate from D-glyceraldehyde 3-phosphate: step 3/5. Functionally, catalyzes the interconversion of 2-phosphoglycerate and 3-phosphoglycerate. The polypeptide is 2,3-bisphosphoglycerate-dependent phosphoglycerate mutase (Corynebacterium diphtheriae (strain ATCC 700971 / NCTC 13129 / Biotype gravis)).